Here is a 254-residue protein sequence, read N- to C-terminus: Allene oxide cyclase 4, chloroplastic (254 aa).

The N-terminal 52 residues, 1 to 52 (MIMASSAAASISMITLRNLSRNHQSHQSTFLGFSRSFHNQRISSNSPGLSTR), are a transit peptide targeting the chloroplast.

The protein belongs to the allene oxide cyclase family. Highly expressed in fully developed leaves.

It localises to the plastid. The protein resides in the chloroplast. The catalysed reaction is (9Z,13S,15Z)-12,13-epoxyoctadeca-9,11,15-trienoate = (9S,13S,15Z)-12-oxophyto-10,15-dienoate. Its function is as follows. Involved in the production of 12-oxo-phytodienoic acid (OPDA), a precursor of jasmonic acid. This Arabidopsis thaliana (Mouse-ear cress) protein is Allene oxide cyclase 4, chloroplastic (AOC4).